A 499-amino-acid polypeptide reads, in one-letter code: Cysteine--tRNA ligase (499 aa).

Zn(2+) is bound at residue C31. The 'HIGH' region signature appears at 33–43 (VTVYDLCHLGH). C215, H240, and E244 together coordinate Zn(2+). Residues 272 to 276 (KMSKS) carry the 'KMSKS' region motif. Residue K275 participates in ATP binding.

Belongs to the class-I aminoacyl-tRNA synthetase family. In terms of assembly, monomer. The cofactor is Zn(2+).

It is found in the cytoplasm. The enzyme catalyses tRNA(Cys) + L-cysteine + ATP = L-cysteinyl-tRNA(Cys) + AMP + diphosphate. The protein is Cysteine--tRNA ligase of Synechococcus sp. (strain WH7803).